Consider the following 60-residue polypeptide: Large ribosomal subunit protein uL30 (60 aa).

It belongs to the universal ribosomal protein uL30 family. Part of the 50S ribosomal subunit.

This Finegoldia magna (strain ATCC 29328 / DSM 20472 / WAL 2508) (Peptostreptococcus magnus) protein is Large ribosomal subunit protein uL30.